A 971-amino-acid chain; its full sequence is Piwi-like protein 2 (971 aa).

Position 45 is a symmetric dimethylarginine (Arg-45). Residue Arg-74 is modified to Omega-N-methylarginine; by PRMT5; alternate. Symmetric dimethylarginine; by PRMT5; alternate is present on Arg-74. Arg-83 carries the omega-N-methylarginine; alternate modification. 2 positions are modified to symmetric dimethylarginine; alternate: Arg-83 and Arg-95. Omega-N-methylarginine; by PRMT5; alternate is present on Arg-95. Residue Arg-100 is modified to Symmetric dimethylarginine; by PRMT5; alternate. Arg-100 is subject to Omega-N-methylarginine; alternate. Positions 102–124 (LSANMVRKDREEPRSSLPDPSVL) are disordered. Symmetric dimethylarginine is present on residues Arg-144 and Arg-156. The disordered stretch occupies residues 159 to 200 (SSIGRGMDKPPSAFGLTARDPPRLPQPPALSPTSLHSADPPP). Arg-163 carries the symmetric dimethylarginine; by PRMT5 modification. In terms of domain architecture, PAZ spans 387–500 (SVLDVMHAIY…LLPELSFMTG (114 aa)). The residue at position 549 (Arg-549) is a Symmetric dimethylarginine; by PRMT5. The Piwi domain maps to 666–957 (MVVCIIMGTR…LAFLSGQILH (292 aa)). Catalysis depends on residues Asp-743, Glu-781, Asp-813, and His-946.

The protein belongs to the argonaute family. Piwi subfamily. As to quaternary structure, interacts with DDX4, MAEL, EIF3A, EIF4E, EIF4G, PRMT5 and WDR77. Associates with EIF4E- and EIF4G-containing m7G cap-binding complexes. Interacts (when methylated on arginine residues) with TDRD1 and TDRKH/TDRD2. Interacts with TDRD12. Component of the PET complex, at least composed of EXD1, PIWIL2, TDRD12 and piRNAs. Interacts with MOV10L1. Interacts with GPAT2. Interacts with Tex19.1 and, probably, Tex19.2. Interacts (via PIWI domain) with BMAL1 and CLOCK. Interacts with GSK3B. Interacts with TEX15. Requires Mg(2+) as cofactor. Post-translationally, arginine methylation by PRMT5 is required for the interaction with Tudor domain-containing protein TDRD1 and subsequent localization to the meiotic nuage, also named P granule. Expressed in adult testis, specifically in spermatocytes and in spermatogonia. Only detected in primordial germ cells of both sexes. Widely expressed in tumors. Also present at early stages of oocyte growth. Present in the mitotic spermatogonia. Not detected in the first stages of meiosis (preleptotene and leptotene). Detected at the late zygotene stage and increases throughout pachytene, declining from this stage onward until expression stops at the early round spermatid stage (at protein level).

The protein resides in the cytoplasm. Endoribonuclease that plays a central role during spermatogenesis by repressing transposable elements and preventing their mobilization, which is essential for the germline integrity. Plays an essential role in meiotic differentiation of spermatocytes, germ cell differentiation and in self-renewal of spermatogonial stem cells. Its presence in oocytes suggests that it may participate in similar functions during oogenesis in females. Acts via the piRNA metabolic process, which mediates the repression of transposable elements during meiosis by forming complexes composed of piRNAs and Piwi proteins and govern the methylation and subsequent repression of transposons. During piRNA biosynthesis, plays a key role in the piRNA amplification loop, also named ping-pong amplification cycle, by acting as a 'slicer-competent' piRNA endoribonuclease that cleaves primary piRNAs, which are then loaded onto 'slicer-incompetent' PIWIL4. PIWIL2 slicing produces a pre-miRNA intermediate, which is then processed in mature piRNAs, and as well as a 16 nucleotide by-product that is degraded. Required for PIWIL4/MIWI2 nuclear localization and association with secondary piRNAs antisense. Besides their function in transposable elements repression, piRNAs are probably involved in other processes during meiosis such as translation regulation. Indirectly modulates expression of genes such as PDGFRB, SLC2A1, ITGA6, GJA7, THY1, CD9 and STRA8. Represses circadian rhythms by promoting the stability and activity of core clock components BMAL1 and CLOCK by inhibiting GSK3B-mediated phosphorylation and ubiquitination-dependent degradation of these proteins. The chain is Piwi-like protein 2 from Mus musculus (Mouse).